A 283-amino-acid chain; its full sequence is Polyamine aminopropyltransferase (283 aa).

The PABS domain occupies 5-238 (PTWIDEYHKG…GIWSWTFASD (234 aa)). An S-methyl-5'-thioadenosine-binding site is contributed by Gln-32. Residues His-63 and Asp-87 each coordinate spermidine. S-methyl-5'-thioadenosine-binding positions include Glu-107 and 139–140 (DG). The Proton acceptor role is filled by Asp-158. 158–161 (DCSD) contributes to the spermidine binding site.

Belongs to the spermidine/spermine synthase family. In terms of assembly, homodimer or homotetramer.

It is found in the cytoplasm. The catalysed reaction is S-adenosyl 3-(methylsulfanyl)propylamine + putrescine = S-methyl-5'-thioadenosine + spermidine + H(+). The protein operates within amine and polyamine biosynthesis; spermidine biosynthesis; spermidine from putrescine: step 1/1. Catalyzes the irreversible transfer of a propylamine group from the amino donor S-adenosylmethioninamine (decarboxy-AdoMet) to putrescine (1,4-diaminobutane) to yield spermidine. The sequence is that of Polyamine aminopropyltransferase from Prochlorococcus marinus subsp. pastoris (strain CCMP1986 / NIES-2087 / MED4).